Reading from the N-terminus, the 207-residue chain is MARYIGPKAKLSRREGTDLFLKSARRSLADKCKLDSKPGQHGRTSGARTSDYGTQLREKQKVKRIYGVLERQFRRYFAEADRLKGNTGENLLQLLESRLDNVVYRMGFGSTRAEARQLVSHKAIVVNGVVSNIPSMQVKAGDVVAVRETKKKQARILEALSLAEQGGMPSWVAVDSKKFEGTFKQKPERSDIAGDINESLIVELYSR.

The segment at Cys32 to Gln55 is disordered. Polar residues predominate over residues Gly42–Gly53. The S4 RNA-binding domain maps to Ser97 to Glu158.

This sequence belongs to the universal ribosomal protein uS4 family. Part of the 30S ribosomal subunit. Contacts protein S5. The interaction surface between S4 and S5 is involved in control of translational fidelity.

Its function is as follows. One of the primary rRNA binding proteins, it binds directly to 16S rRNA where it nucleates assembly of the body of the 30S subunit. In terms of biological role, with S5 and S12 plays an important role in translational accuracy. This is Small ribosomal subunit protein uS4 from Paraburkholderia phytofirmans (strain DSM 17436 / LMG 22146 / PsJN) (Burkholderia phytofirmans).